Reading from the N-terminus, the 1175-residue chain is Structural maintenance of chromosomes protein 2-1 (1175 aa).

The Zinc-hook domain occupies 2–1161 (HIKEICLEGF…NVLFRTKFVD (1160 aa)). 32-39 (GLNGSGKS) provides a ligand contact to ATP. Residues 172–508 (RMYENKKEAA…AQLANFQFTY (337 aa)) are a coiled coil. In terms of domain architecture, SMC hinge spans 518–638 (SKVKGVVAKL…KTTDVAKEVA (121 aa)). A coiled-coil region spans residues 673-1028 (LRKLHDLAEA…ELDEKKKETL (356 aa)).

The protein belongs to the SMC family. SMC2 subfamily. Forms a heterodimer with SMC4. Component of the condensin complex, which contains the SMC2 and SMC4 heterodimer, and three non SMC subunits that probably regulate the complex: CAPH, CAPD2 and CAPG. Highly expressed in roots and young floral buds.

It is found in the nucleus. In terms of biological role, central component of the condensin complex, a complex required for conversion of interphase chromatin into mitotic-like condense chromosomes. The condensin complex probably introduces positive supercoils into relaxed DNA in the presence of type I topoisomerases and converts nicked DNA into positive knotted forms in the presence of type II topoisomerases. Also involved in chromosome segregation in meiosis. This is Structural maintenance of chromosomes protein 2-1 (SMC2-1) from Arabidopsis thaliana (Mouse-ear cress).